We begin with the raw amino-acid sequence, 109 residues long: uncharacterized protein (109 aa).

This is an uncharacterized protein from Saccharomyces cerevisiae (strain ATCC 204508 / S288c) (Baker's yeast).